Here is a 383-residue protein sequence, read N- to C-terminus: Cobalt-precorrin-5B C(1)-methyltransferase (383 aa).

The interval 1 to 24 (MQPSARRPFDLATPAPNGLRRGRT) is disordered.

This sequence belongs to the CbiD family.

It catalyses the reaction Co-precorrin-5B + S-adenosyl-L-methionine = Co-precorrin-6A + S-adenosyl-L-homocysteine. The protein operates within cofactor biosynthesis; adenosylcobalamin biosynthesis; cob(II)yrinate a,c-diamide from sirohydrochlorin (anaerobic route): step 6/10. In terms of biological role, catalyzes the methylation of C-1 in cobalt-precorrin-5B to form cobalt-precorrin-6A. The chain is Cobalt-precorrin-5B C(1)-methyltransferase from Ralstonia nicotianae (strain ATCC BAA-1114 / GMI1000) (Ralstonia solanacearum).